A 181-amino-acid chain; its full sequence is Transcription termination/antitermination protein NusG (181 aa).

Residues 130-161 (PGEMVRVNDGPFADFNGVVEEVDYEKSRLKVS) enclose the KOW domain.

This sequence belongs to the NusG family. In terms of assembly, monomer. Interacts with the transcription termination factor Rho and with RNA polymerase.

Its function is as follows. Participates in transcription elongation, termination and antitermination. In the absence of Rho, increases the rate of transcription elongation by the RNA polymerase (RNAP), probably by partially suppressing pausing. In the presence of Rho, modulates most Rho-dependent termination events by interacting with the RNAP to render the complex more susceptible to the termination activity of Rho. May be required to overcome a kinetic limitation of Rho to function at certain terminators. Also involved in ribosomal RNA transcriptional antitermination. The protein is Transcription termination/antitermination protein NusG of Shigella flexneri.